The primary structure comprises 505 residues: Pleckstrin homology domain-containing family D member 1 (505 aa).

In terms of domain architecture, PH spans 28-136 (KVQLYGVLWK…WLEMLQESGK (109 aa)). A coiled-coil region spans residues 146 to 391 (EAMIKSLEAQ…KVRNKEKEER (246 aa)). A disordered region spans residues 264–284 (DKNQPQPLTNQSEQPPASDGL). Residues 267–278 (QPQPLTNQSEQP) are compositionally biased toward polar residues. The residue at position 502 (Arg502) is an Omega-N-methylarginine.

This sequence belongs to the PLEKHD1 family.

The chain is Pleckstrin homology domain-containing family D member 1 (Plekhd1) from Mus musculus (Mouse).